The primary structure comprises 126 residues: Glycine cleavage system H protein (126 aa).

Residues 22-104 form the Lipoyl-binding domain; that stretch reads TVTIGVTDFA…YGEGWMIKIK (83 aa). K63 carries the post-translational modification N6-lipoyllysine.

This sequence belongs to the GcvH family. In terms of assembly, the glycine cleavage system is composed of four proteins: P, T, L and H. It depends on (R)-lipoate as a cofactor.

The glycine cleavage system catalyzes the degradation of glycine. The H protein shuttles the methylamine group of glycine from the P protein to the T protein. The chain is Glycine cleavage system H protein from Christiangramia forsetii (strain DSM 17595 / CGMCC 1.15422 / KT0803) (Gramella forsetii).